A 1987-amino-acid polypeptide reads, in one-letter code: Transcriptional activator DEMETER (1987 aa).

3 disordered regions span residues 246–378, 392–415, and 793–901; these read TGHE…NKSP, DLEN…SSGA, and MPPE…GPSG. The segment covering 258 to 277 has biased composition (polar residues); the sequence is SMQSIMDSSAVNATEATEQN. Residues 341–364 are compositionally biased toward basic and acidic residues; that stretch reads ATQEKVKSKETGSAKKKNLKESAT. The segment covering 813–829 has biased composition (polar residues); that stretch reads NTASISKGASKGNSSPV. A compositionally biased stretch (basic residues) spans 844 to 855; it reads PAKKGRAGRKKS. The interval 955-1054 is DEMETER; sequence KVDIDDETTR…AFMSLAARFP (100 aa). 2 disordered regions span residues 1324-1351 and 1439-1471; these read LPGM…QDEM and TLAD…KNNM. Composition is skewed to basic and acidic residues over residues 1338-1351 and 1452-1469; these read EHQD…QDEM and SLRK…RNKN. 4 residues coordinate [4Fe-4S] cluster: Cys-1629, Cys-1636, Cys-1639, and Cys-1645.

Belongs to the DNA glycosylase family. DEMETER subfamily. [4Fe-4S] cluster serves as cofactor. Mainly expressed in immature flower buds, then decreases as the flower matures. Expressed in the ovule carpels, but not expressed in pollen stamens. Expressed in developing and mature ovules (stages 12-14), then strongly decreases after fertilization.

The protein resides in the nucleus. In terms of biological role, transcriptional activator involved in gene imprinting. Catalyzes the release of 5-methylcytosine (5-meC) from DNA by a glycosylase/lyase mechanism. Allows the expression of the maternal copy of the imprinted MEA gene before fertilization, possibly by antagonizing or suppressing DNA methylation on target promoter. Probably acts by nicking the MEA promoter. Required for stable reproducible patterns of floral and vegetative development. The polypeptide is Transcriptional activator DEMETER (DME) (Arabidopsis thaliana (Mouse-ear cress)).